The following is a 171-amino-acid chain: Skp-like protein (171 aa).

The signal sequence occupies residues 1 to 21 (MKKLLFSTFLLVLGSTSAAHA).

It belongs to the Skp family.

The chain is Skp-like protein from Chlamydia pneumoniae (Chlamydophila pneumoniae).